The following is a 260-amino-acid chain: Snake venom serine protease homolog KN7 (260 aa).

A signal peptide spans 1–18 (MVLIRVLANLLILQLSYA). The propeptide occupies 19 to 24 (QKSSEL). The 227-residue stretch at 25 to 251 (IIGGDECNIN…HLDWIKSIIA (227 aa)) folds into the Peptidase S1 domain. Intrachain disulfides connect cysteine 31-cysteine 165, cysteine 52-cysteine 68, cysteine 100-cysteine 258, cysteine 144-cysteine 212, cysteine 176-cysteine 191, and cysteine 202-cysteine 227. N-linked (GlcNAc...) asparagine glycosylation is found at asparagine 83, asparagine 123, and asparagine 124.

Belongs to the peptidase S1 family. Snake venom subfamily. Expressed by the venom gland.

It is found in the secreted. Snake venom serine protease homolog that may act in the hemostasis system of the prey. This is Snake venom serine protease homolog KN7 from Trimeresurus stejnegeri (Chinese green tree viper).